Consider the following 514-residue polypeptide: Peptide chain release factor 3 (514 aa).

Residues 8–268 (KKRRTFAIIS…TFLKFAPEPH (261 aa)) form the tr-type G domain. GTP contacts are provided by residues 17–24 (SHPDAGKT), 85–89 (DTPGH), and 139–142 (NKLD).

This sequence belongs to the TRAFAC class translation factor GTPase superfamily. Classic translation factor GTPase family. PrfC subfamily.

The protein resides in the cytoplasm. In terms of biological role, increases the formation of ribosomal termination complexes and stimulates activities of RF-1 and RF-2. It binds guanine nucleotides and has strong preference for UGA stop codons. It may interact directly with the ribosome. The stimulation of RF-1 and RF-2 is significantly reduced by GTP and GDP, but not by GMP. The sequence is that of Peptide chain release factor 3 from Streptococcus pneumoniae serotype 19F (strain G54).